The chain runs to 505 residues: T-cell activation inhibitor, mitochondrial (505 aa).

Positions 216–243 (LKNSLPLRKELDRLKNELSELLQLSDIR) form a coiled coil.

In terms of tissue distribution, expressed in peripheral blood leukocytes, mainly in T-lymphocytes.

It is found in the mitochondrion. In terms of biological role, may regulate T-cell apoptosis. The polypeptide is T-cell activation inhibitor, mitochondrial (Tcaim) (Rattus norvegicus (Rat)).